Consider the following 301-residue polypeptide: GTPase Era (301 aa).

One can recognise an Era-type G domain in the interval 4–173 (KAGFVALIGK…LECISQHLSP (170 aa)). Positions 12 to 19 (GKPNAGKS) are G1. 12 to 19 (GKPNAGKS) provides a ligand contact to GTP. Positions 38-42 (NATRK) are G2. Residues 64–67 (DTPG) are G3. Residues 64 to 68 (DTPGL) and 122 to 125 (SKID) each bind GTP. Positions 122–125 (SKID) are G4. A G5 region spans residues 152-154 (LSA). Positions 204-280 (LSDEIPYESD…FLNLQVIAQK (77 aa)) constitute a KH type-2 domain.

It belongs to the TRAFAC class TrmE-Era-EngA-EngB-Septin-like GTPase superfamily. Era GTPase family. As to quaternary structure, monomer.

It is found in the cytoplasm. Its subcellular location is the cell inner membrane. Its function is as follows. An essential GTPase that binds both GDP and GTP, with rapid nucleotide exchange. Plays a role in 16S rRNA processing and 30S ribosomal subunit biogenesis and possibly also in cell cycle regulation and energy metabolism. This Helicobacter pylori (strain ATCC 700392 / 26695) (Campylobacter pylori) protein is GTPase Era.